The following is a 601-amino-acid chain: Glutamine--fructose-6-phosphate aminotransferase [isomerizing] (601 aa).

Cysteine 2 functions as the Nucleophile; for GATase activity in the catalytic mechanism. Residues 2 to 216 (CGIVGYIGTN…DKEIVIVTKD (215 aa)) enclose the Glutamine amidotransferase type-2 domain. SIS domains follow at residues 282 to 421 (ILDE…EIGD) and 453 to 591 (IAGE…VDKP). The active-site For Fru-6P isomerization activity is the lysine 596.

In terms of assembly, homodimer.

Its subcellular location is the cytoplasm. It carries out the reaction D-fructose 6-phosphate + L-glutamine = D-glucosamine 6-phosphate + L-glutamate. Catalyzes the first step in hexosamine metabolism, converting fructose-6P into glucosamine-6P using glutamine as a nitrogen source. The sequence is that of Glutamine--fructose-6-phosphate aminotransferase [isomerizing] from Listeria innocua serovar 6a (strain ATCC BAA-680 / CLIP 11262).